The sequence spans 396 residues: Elongation factor Tu (396 aa).

Residues 10–206 (KPHVNVGTIG…ALDTYIPLPE (197 aa)) form the tr-type G domain. Residues 19 to 26 (GHVDHGKT) are G1. 19 to 26 (GHVDHGKT) is a binding site for GTP. T26 provides a ligand contact to Mg(2+). A G2 region spans residues 60–64 (GITIN). The tract at residues 81–84 (DCPG) is G3. Residues 81–85 (DCPGH) and 136–139 (NKCD) contribute to the GTP site. Positions 136–139 (NKCD) are G4. Positions 174–176 (SAK) are G5.

Belongs to the TRAFAC class translation factor GTPase superfamily. Classic translation factor GTPase family. EF-Tu/EF-1A subfamily. In terms of assembly, monomer.

Its subcellular location is the cytoplasm. It carries out the reaction GTP + H2O = GDP + phosphate + H(+). In terms of biological role, GTP hydrolase that promotes the GTP-dependent binding of aminoacyl-tRNA to the A-site of ribosomes during protein biosynthesis. The sequence is that of Elongation factor Tu from Polaromonas sp. (strain JS666 / ATCC BAA-500).